Here is a 91-residue protein sequence, read N- to C-terminus: Large ribosomal subunit protein uL23 (91 aa).

The protein belongs to the universal ribosomal protein uL23 family. As to quaternary structure, part of the 50S ribosomal subunit. Contacts protein L29, and trigger factor when it is bound to the ribosome.

Functionally, one of the early assembly proteins it binds 23S rRNA. One of the proteins that surrounds the polypeptide exit tunnel on the outside of the ribosome. Forms the main docking site for trigger factor binding to the ribosome. The protein is Large ribosomal subunit protein uL23 of Macrococcus caseolyticus (strain JCSC5402) (Macrococcoides caseolyticum).